We begin with the raw amino-acid sequence, 189 residues long: Molybdenum cofactor guanylyltransferase (189 aa).

GTP is bound by residues 10-12 (LAG), lysine 23, asparagine 51, aspartate 69, and aspartate 99. Aspartate 99 provides a ligand contact to Mg(2+).

It belongs to the MobA family. In terms of assembly, monomer. The cofactor is Mg(2+).

Its subcellular location is the cytoplasm. It carries out the reaction Mo-molybdopterin + GTP + H(+) = Mo-molybdopterin guanine dinucleotide + diphosphate. Its function is as follows. Transfers a GMP moiety from GTP to Mo-molybdopterin (Mo-MPT) cofactor (Moco or molybdenum cofactor) to form Mo-molybdopterin guanine dinucleotide (Mo-MGD) cofactor. The sequence is that of Molybdenum cofactor guanylyltransferase from Pasteurella multocida (strain Pm70).